The sequence spans 253 residues: 5-oxoprolinase subunit A (253 aa).

Belongs to the LamB/PxpA family. Forms a complex composed of PxpA, PxpB and PxpC.

The catalysed reaction is 5-oxo-L-proline + ATP + 2 H2O = L-glutamate + ADP + phosphate + H(+). Catalyzes the cleavage of 5-oxoproline to form L-glutamate coupled to the hydrolysis of ATP to ADP and inorganic phosphate. This is 5-oxoprolinase subunit A from Bacillus cereus (strain AH187).